The following is a 244-amino-acid chain: N-(5'-phosphoribosyl)anthranilate isomerase 3, chloroplastic (244 aa).

Residues 1 to 32 (MSTGISSDLHLHPRALNFSKTSKSGLSNRKVS) constitute a chloroplast transit peptide.

Belongs to the TrpF family.

Its subcellular location is the plastid. The protein localises to the chloroplast. The catalysed reaction is N-(5-phospho-beta-D-ribosyl)anthranilate = 1-(2-carboxyphenylamino)-1-deoxy-D-ribulose 5-phosphate. The protein operates within amino-acid biosynthesis; L-tryptophan biosynthesis; L-tryptophan from chorismate: step 3/5. The polypeptide is N-(5'-phosphoribosyl)anthranilate isomerase 3, chloroplastic (PAI3) (Arabidopsis thaliana (Mouse-ear cress)).